A 375-amino-acid polypeptide reads, in one-letter code: MSVPAFIDITEEDQASELRSYLKSKGAEISEENSEGGLHVDLAQIIEACDVCLKDDDKDVESVMNSIVSLLLILETEKQEALIESLCEKLVKFREGERPSLRMQLLSNLFHGMDENTPVRHTVYCSLIKVAATCNAITFMPTDLDQVRKWIVDWNLNTEKKHTLLRLVYEALVDCKKSEAAAKVMVELLGSYTEDNASQARVDAHRCIVRALKDPNTYLFDHLLALKPVRFLEGELIHDLLTIFVSAKLISYVKFYQSNKDFIESLGLSHEQNMSKMRLLTFMGMAVEMKEISFETMQQELQIGAEDVEAFVIDAVRTKMVYSKIDQTQRKVVVSHSTHRTFGKQQWQQLYDTLCSWKQNLSTVKSSLQTLSPTA.

A PCI domain is found at 180 to 339 (AAAKVMVELL…RKVVVSHSTH (160 aa)).

The protein belongs to the eIF-3 subunit M family. As to quaternary structure, component of the eukaryotic translation initiation factor 3 (eIF-3) complex, which is composed of 13 subunits: eif3a, eif3b, eif3c, eif3d, eif3e, eif3f, eif3g, eif3h, eif3i, eif3j, eif3k, eif3l and eif3m.

It is found in the cytoplasm. Functionally, component of the eukaryotic translation initiation factor 3 (eIF-3) complex, which is involved in protein synthesis of a specialized repertoire of mRNAs and, together with other initiation factors, stimulates binding of mRNA and methionyl-tRNAi to the 40S ribosome. The eIF-3 complex specifically targets and initiates translation of a subset of mRNAs involved in cell proliferation. In Danio rerio (Zebrafish), this protein is Eukaryotic translation initiation factor 3 subunit M (eif3m).